A 105-amino-acid chain; its full sequence is Large ribosomal subunit protein uL24 (105 aa).

Belongs to the universal ribosomal protein uL24 family. In terms of assembly, part of the 50S ribosomal subunit.

One of two assembly initiator proteins, it binds directly to the 5'-end of the 23S rRNA, where it nucleates assembly of the 50S subunit. Its function is as follows. One of the proteins that surrounds the polypeptide exit tunnel on the outside of the subunit. The sequence is that of Large ribosomal subunit protein uL24 from Buchnera aphidicola subsp. Cinara cedri (strain Cc).